A 244-amino-acid chain; its full sequence is U4/U6.U5 tri-snRNP-associated protein 3-like protein C162.01c (244 aa).

2 stretches are compositionally biased toward basic and acidic residues: residues 1–11 and 20–116; these read MSSSRSGEHRR and ESSR…RRDG. Disordered stretches follow at residues 1–192 and 223–244; these read MSSS…EDEA and KKTK…LDNE. 2 positions are modified to phosphoserine: Ser-121 and Ser-140. The segment covering 126 to 182 has biased composition (basic and acidic residues); it reads GLERKREHEKLQAPSPKEEEERPVDQGDKMDGVKEDKDGSLEVGKSHDAMTRTKSAE. Acidic residues predominate over residues 183–192; the sequence is EEIVEQEDEA.

It belongs to the SNUT3 family. As to quaternary structure, part of a tri-snRNP complex.

It localises to the nucleus. In terms of biological role, may play a role in mRNA splicing. In Schizosaccharomyces pombe (strain 972 / ATCC 24843) (Fission yeast), this protein is U4/U6.U5 tri-snRNP-associated protein 3-like protein C162.01c.